A 218-amino-acid polypeptide reads, in one-letter code: Adenylate kinase (218 aa).

10-15 provides a ligand contact to ATP; that stretch reads GAGKGT. The tract at residues 30–59 is NMP; sequence STGDMLRAAIAKGTPLGLSAQKIMESGGLV. Residues threonine 31, arginine 36, 57–59, 85–88, and glutamine 92 each bind AMP; these read GLV and GFPR. An LID region spans residues 122–159; the sequence is GRRIHQPSGRVYHVVNQPPKNPGVDDITGEPLIQRDDD. ATP contacts are provided by residues arginine 123 and 132–133; that span reads VY. Residues arginine 156 and arginine 167 each coordinate AMP. Glycine 203 is an ATP binding site.

This sequence belongs to the adenylate kinase family. In terms of assembly, monomer.

The protein localises to the cytoplasm. The catalysed reaction is AMP + ATP = 2 ADP. Its pathway is purine metabolism; AMP biosynthesis via salvage pathway; AMP from ADP: step 1/1. Catalyzes the reversible transfer of the terminal phosphate group between ATP and AMP. Plays an important role in cellular energy homeostasis and in adenine nucleotide metabolism. The sequence is that of Adenylate kinase from Legionella pneumophila (strain Lens).